A 161-amino-acid chain; its full sequence is MGAKDYIGSLFLKELVKGMALTGRHFFARKITVQFPEEKTPQSARFRGLHALRRYPNGEERCIACKLCEAICPAMAITIESEQREDGSRRTSRYDIDLTKCIFCGFCEEACPVDAVVETRVFEYHGEQRGDLYYTKQMLLAVGDRHEQQIAADREQEAKFR.

4Fe-4S ferredoxin-type domains are found at residues 52–82 (LRRY…IESE) and 92–121 (SRYD…ETRV). Residues Cys-62, Cys-65, Cys-68, Cys-72, Cys-101, Cys-104, Cys-107, and Cys-111 each coordinate [4Fe-4S] cluster.

Belongs to the complex I 23 kDa subunit family. In terms of assembly, NDH-1 is composed of 14 different subunits. Subunits NuoA, H, J, K, L, M, N constitute the membrane sector of the complex. [4Fe-4S] cluster serves as cofactor.

It is found in the cell inner membrane. It catalyses the reaction a quinone + NADH + 5 H(+)(in) = a quinol + NAD(+) + 4 H(+)(out). Its function is as follows. NDH-1 shuttles electrons from NADH, via FMN and iron-sulfur (Fe-S) centers, to quinones in the respiratory chain. The immediate electron acceptor for the enzyme in this species is believed to be ubiquinone. Couples the redox reaction to proton translocation (for every two electrons transferred, four hydrogen ions are translocated across the cytoplasmic membrane), and thus conserves the redox energy in a proton gradient. In Azoarcus sp. (strain BH72), this protein is NADH-quinone oxidoreductase subunit I.